Consider the following 528-residue polypeptide: MFSLQDLCRKNTFFLPNGFNKHTLQLLGLYWKEHGSVHRVEKDNIMIQNELVLSINDALLLAGEEGDTDVVQLLLLWEGNLHYAIIGALKTEKYNLICEYHSQIEDWHILLPMIQDPETFEKCHDLSLQCDFICLLQHAIKYNKLSILVKYKEDLLNIRIRHRVQSLFVLACENRRTEIIEWIGQNLSIPEPDAIFSIAIATKDLELFSLGYKIIFDYMQRQGILQLSNGLRMVVLNRHISMAIDNGLLPFVLETLKHGGNIHRALSYAVSHNRRKILDYLIRQKNIPPNTIERLLYLAVKNQSSRKTLNLLLSYINYKVKNVKKLVEHVVDHNSTLVVTILLEKKINLIDAVLTRLVKHSTYFRVREFIQEFSISPEKFIKIAVREKRNVIIKGISEDIWENPAERITYLKQIVHTIKYESGREFLINIIHTIYQSYSLKPEEILKLARFYVKHNATTHFKDLCKYLWLNRGTESKKLFLECLEIADKKDFPAIKNIVSEYINYLFTAGAITKEEIMQVYTLEYAMY.

ANK repeat units follow at residues 54 to 83 (SIND…NLHY) and 261 to 291 (NIHR…PPNT).

Belongs to the asfivirus MGF 505 family. In terms of assembly, interacts with host STING1. Interacts with host JAK1; this interaction leads to JAK1 degradation. Interacts with host JAK2; this interaction leads to JAK2 degradation. Interacts with host RELA; this interaction inhibits NF-kappa-B promoter activity.

The protein resides in the host cytoplasm. In terms of biological role, plays a role in virus cell tropism, and may be required for efficient virus replication in macrophages. Interferes with host NF-kappa-B promoter activity mediated by TLR8. Mechanistically, inhibits the phosphorylation and subsequent nuclear translocation of host NF-kappa-B RELA subunit downstream of TLR8. Promotes the expression of the autophagy-related protein host ULK1 to degrade host STING and inhibit the interferon response. Also inhibits JAK1- and JAK2-mediated signaling and thus negatively regulates the IFN-gamma signaling. In African swine fever virus (isolate Tick/Malawi/Lil 20-1/1983) (ASFV), this protein is Protein MGF 505-7R.